The sequence spans 336 residues: Ketol-acid reductoisomerase (NADP(+)) (336 aa).

Residues 2–181 (AKVYYEKDVM…GATRAGVLET (180 aa)) form the KARI N-terminal Rossmann domain. Residues 25–28 (YGSQ), Arg-48, Ser-52, and 82–85 (DELQ) contribute to the NADP(+) site. His-107 is a catalytic residue. Residue Gly-133 coordinates NADP(+). Positions 182-327 (TFKEETETDL…RQLREMMPFV (146 aa)) constitute a KARI C-terminal knotted domain. Mg(2+)-binding residues include Asp-190, Glu-194, Glu-226, and Glu-230. Substrate is bound at residue Ser-251.

The protein belongs to the ketol-acid reductoisomerase family. Mg(2+) serves as cofactor.

The enzyme catalyses (2R)-2,3-dihydroxy-3-methylbutanoate + NADP(+) = (2S)-2-acetolactate + NADPH + H(+). It carries out the reaction (2R,3R)-2,3-dihydroxy-3-methylpentanoate + NADP(+) = (S)-2-ethyl-2-hydroxy-3-oxobutanoate + NADPH + H(+). The protein operates within amino-acid biosynthesis; L-isoleucine biosynthesis; L-isoleucine from 2-oxobutanoate: step 2/4. Its pathway is amino-acid biosynthesis; L-valine biosynthesis; L-valine from pyruvate: step 2/4. Involved in the biosynthesis of branched-chain amino acids (BCAA). Catalyzes an alkyl-migration followed by a ketol-acid reduction of (S)-2-acetolactate (S2AL) to yield (R)-2,3-dihydroxy-isovalerate. In the isomerase reaction, S2AL is rearranged via a Mg-dependent methyl migration to produce 3-hydroxy-3-methyl-2-ketobutyrate (HMKB). In the reductase reaction, this 2-ketoacid undergoes a metal-dependent reduction by NADPH to yield (R)-2,3-dihydroxy-isovalerate. This chain is Ketol-acid reductoisomerase (NADP(+)), found in Bacillus cytotoxicus (strain DSM 22905 / CIP 110041 / 391-98 / NVH 391-98).